Reading from the N-terminus, the 1024-residue chain is Unconventional myosin-Ig (1024 aa).

A Myosin motor domain is found at 15–713; that stretch reads YGKPDFVLLD…TLVTLEQSRA (699 aa). 108–115 is a binding site for ATP; sequence GESGAGKT. Residues 590–612 form an actin-binding region; it reads MVALVENLASKEPFYVRCIKPNE. The region spanning 716 to 745 is the IQ domain; sequence IPIIVLLLQKAWRGTLARWHCRRLRAIYTI. In terms of domain architecture, TH1 spans 830–1023; sequence GLRQDWGCQR…RSTFTLLWPS (194 aa). Positions 999 to 1024 are disordered; sequence VEPRPEQPEPDFQSSRSTFTLLWPSH.

Belongs to the TRAFAC class myosin-kinesin ATPase superfamily. Myosin family. In terms of assembly, interacts with calmodulin; via its IQ motifs. As to expression, specifically expressed in hematopoietic cells. Detected in adult tissues of the immune system such as thymus, lymph nodes and spleen, but not in brain, lung, heart, liver, small intestine, testis and kidney (at protein level). Highly expressed in T-lymphocytes; constitutes the most highly expressed class I myosin in naive CD4 and CD8 T-cells. Also present in B-lymphocytes.

The protein resides in the cell membrane. It localises to the cell projection. Its subcellular location is the phagocytic cup. Functionally, unconventional myosin required during immune response for detection of rare antigen-presenting cells by regulating T-cell migration. Unconventional myosins are actin-based motor molecules with ATPase activity and serve in intracellular movements. Acts as a regulator of T-cell migration by generating membrane tension, enforcing cell-intrinsic meandering search, thereby enhancing detection of rare antigens during lymph-node surveillance, enabling pathogen eradication. Also required in B-cells, where it regulates different membrane/cytoskeleton-dependent processes. Involved in Fc-gamma receptor (Fc-gamma-R) phagocytosis. In Mus musculus (Mouse), this protein is Unconventional myosin-Ig (Myo1g).